A 160-amino-acid chain; its full sequence is Ureidoglycolate lyase (160 aa).

Belongs to the ureidoglycolate lyase family. Homodimer. Requires Ni(2+) as cofactor.

The catalysed reaction is (S)-ureidoglycolate = urea + glyoxylate. It functions in the pathway nitrogen metabolism; (S)-allantoin degradation. Its function is as follows. Catalyzes the catabolism of the allantoin degradation intermediate (S)-ureidoglycolate, generating urea and glyoxylate. Involved in the utilization of allantoin as nitrogen source. This Salmonella enteritidis protein is Ureidoglycolate lyase.